We begin with the raw amino-acid sequence, 133 residues long: Large ribosomal subunit protein eL19 (133 aa).

The disordered stretch occupies residues 55 to 83 (RGISGARKKPRRKGPGSRKGGKYSKLPRK). The span at 60-83 (ARKKPRRKGPGSRKGGKYSKLPRK) shows a compositional bias: basic residues.

The protein belongs to the eukaryotic ribosomal protein eL19 family. As to quaternary structure, part of the 50S ribosomal subunit.

In terms of biological role, binds to the 23S rRNA. The polypeptide is Large ribosomal subunit protein eL19 (Korarchaeum cryptofilum (strain OPF8)).